The following is a 102-amino-acid chain: Small ribosomal subunit protein uS10 (102 aa).

The protein belongs to the universal ribosomal protein uS10 family. As to quaternary structure, part of the 30S ribosomal subunit.

Involved in the binding of tRNA to the ribosomes. This Roseiflexus sp. (strain RS-1) protein is Small ribosomal subunit protein uS10.